Reading from the N-terminus, the 604-residue chain is Glutamine--fructose-6-phosphate aminotransferase [isomerizing] (604 aa).

Cys-2 (nucleophile; for GATase activity) is an active-site residue. A Glutamine amidotransferase type-2 domain is found at 2–218 (CGIVGVVGNT…DKELVIVKKD (217 aa)). 2 SIS domains span residues 284 to 423 (IIKS…ANGK) and 456 to 594 (VEQL…VDKP). Catalysis depends on Lys-599, which acts as the For Fru-6P isomerization activity.

In terms of assembly, homodimer.

The protein localises to the cytoplasm. It carries out the reaction D-fructose 6-phosphate + L-glutamine = D-glucosamine 6-phosphate + L-glutamate. Its function is as follows. Catalyzes the first step in hexosamine metabolism, converting fructose-6P into glucosamine-6P using glutamine as a nitrogen source. The sequence is that of Glutamine--fructose-6-phosphate aminotransferase [isomerizing] from Streptococcus agalactiae serotype III (strain NEM316).